A 229-amino-acid polypeptide reads, in one-letter code: Putative N-acetylmannosamine-6-phosphate 2-epimerase (229 aa).

This sequence belongs to the NanE family.

The catalysed reaction is an N-acyl-D-glucosamine 6-phosphate = an N-acyl-D-mannosamine 6-phosphate. Its pathway is amino-sugar metabolism; N-acetylneuraminate degradation; D-fructose 6-phosphate from N-acetylneuraminate: step 3/5. Functionally, converts N-acetylmannosamine-6-phosphate (ManNAc-6-P) to N-acetylglucosamine-6-phosphate (GlcNAc-6-P). This Actinobacillus pleuropneumoniae serotype 5b (strain L20) protein is Putative N-acetylmannosamine-6-phosphate 2-epimerase.